The following is a 261-amino-acid chain: MTDSTAPRLHVQALSADCAEAARRWAERLGLPLAADDEAEFAVQVGEEGLQVLQLGPDSPGPVRVDFVEGASAHRRKFGGGSGQMIAKAVGVQPGIRPRVLDATAGLGRDGFVLASLGCEVTLVERQPLIAALLEDGLERAGRDPDVAPIAARMRLLGGNSADLMRAWDGEAPQVVYLDPMFPHRDKSALVKKEMRLFRPLVGDDLDAPALLQAALALASHRVVVKRPRKAPIIEGPKPGYSLEGKSSRYDIYPKKALGKG.

Residues 109–110 (RD), 125–126 (ER), and Asp179 each bind S-adenosyl-L-methionine.

This sequence belongs to the methyltransferase superfamily. RsmJ family.

The protein localises to the cytoplasm. It catalyses the reaction guanosine(1516) in 16S rRNA + S-adenosyl-L-methionine = N(2)-methylguanosine(1516) in 16S rRNA + S-adenosyl-L-homocysteine + H(+). Its function is as follows. Specifically methylates the guanosine in position 1516 of 16S rRNA. The sequence is that of Ribosomal RNA small subunit methyltransferase J from Pseudomonas aeruginosa (strain UCBPP-PA14).